The sequence spans 80 residues: Clavanin-D (80 aa).

A signal peptide spans 1-19 (MKTTILILLILGLGINAKS). Residues 20 to 29 (LEERKSEEEK) constitute a propeptide that is removed on maturation. Phenylalanine 52 carries the post-translational modification Phenylalanine amide. The propeptide occupies 54 to 80 (DDQQDNGKFYGHYAEDNGKHWYDTGDQ).

In terms of tissue distribution, hemocytes and pharyngeal tissues.

It is found in the secreted. In terms of biological role, has antimicrobial activity against E.coli, L.monocytogenes and C.albicans. The protein is Clavanin-D of Styela clava (Sea squirt).